Consider the following 295-residue polypeptide: Sulfotransferase 1A3 (295 aa).

48–53 (KSGTTW) provides a ligand contact to 3'-phosphoadenylyl sulfate. Dopamine is bound by residues D86 and 106–108 (KSH). The active-site Proton acceptor is H108. Residues R130 and S138 each contribute to the 3'-phosphoadenylyl sulfate site. A dopamine-binding site is contributed by E146. 3'-phosphoadenylyl sulfate is bound by residues Y193, 227–232 (TSFKEM), and 257–259 (RKG).

The protein belongs to the sulfotransferase 1 family. As to quaternary structure, homodimer. In terms of processing, the N-terminus is blocked. In terms of tissue distribution, liver, colon, kidney, lung, brain, spleen, small intestine, placenta and leukocyte.

Its subcellular location is the cytoplasm. The enzyme catalyses a phenol + 3'-phosphoadenylyl sulfate = an aryl sulfate + adenosine 3',5'-bisphosphate + H(+). It carries out the reaction 4-nitrophenol + 3'-phosphoadenylyl sulfate = 4-nitrophenyl sulfate + adenosine 3',5'-bisphosphate. The catalysed reaction is dopamine + 3'-phosphoadenylyl sulfate = dopamine 3-O-sulfate + adenosine 3',5'-bisphosphate + H(+). It catalyses the reaction dopamine + 3'-phosphoadenylyl sulfate = dopamine 4-O-sulfate + adenosine 3',5'-bisphosphate + H(+). The enzyme catalyses serotonin + 3'-phosphoadenylyl sulfate = serotonin O-sulfate + adenosine 3',5'-bisphosphate + H(+). It carries out the reaction (R)-adrenaline + 3'-phosphoadenylyl sulfate = (R)-adrenaline 4'-O-sulfate + adenosine 3',5'-bisphosphate + H(+). The catalysed reaction is (R)-noradrenaline + 3'-phosphoadenylyl sulfate = (R)-noradrenaline 4'-O-sulfate + adenosine 3',5'-bisphosphate + H(+). It catalyses the reaction 3,3',5-triiodo-L-thyronine + 3'-phosphoadenylyl sulfate = 3,3',5-triiodo-L-thyronine sulfate + adenosine 3',5'-bisphosphate + H(+). The enzyme catalyses 3,3',5'-triiodo-L-thyronine + 3'-phosphoadenylyl sulfate = 3,3',5'-triiodo-L-thyronine sulfate + adenosine 3',5'-bisphosphate + H(+). It carries out the reaction 3,3'-diiodo-L-thyronine + 3'-phosphoadenylyl sulfate = 3,3'-diiodo-L-thyronine sulfate + adenosine 3',5'-bisphosphate + H(+). The catalysed reaction is L-thyroxine + 3'-phosphoadenylyl sulfate = L-thyroxine sulfate + adenosine 3',5'-bisphosphate + H(+). Sulfotransferase that utilizes 3'-phospho-5'-adenylyl sulfate (PAPS) as sulfonate donor to catalyze the sulfate conjugation of phenolic monoamines (neurotransmitters such as dopamine, (R)-adrenaline/epinephrine, (R)-noradrenaline/norepinephrine and serotonin) and phenolic and catechol drugs. Catalyzes the sulfation of T4 (L-thyroxine/3,5,3',5'-tetraiodothyronine), T3 (3,5,3'-triiodothyronine), rT3 (3,3',5'-triiodothyronine) and 3,3'-T2 (3,3'-diiodothyronine), with a substrate preference of 3,3'-T2 &gt; rT3 &gt; T3 &gt; T4. This Homo sapiens (Human) protein is Sulfotransferase 1A3 (SULT1A3).